An 871-amino-acid chain; its full sequence is MPPSPPSSAAADQWNIDYVNEDSPLSPRSFSLPPESPQLSTASPIHQRVSRKRQRATSQGLTYNVIRWPLLFFIFFIIYLEFSAYVITRQIVNVFEWLVAWRGYKAKLRKELRKAKTYDEWVNTAKKLDKHLGFDDWKDVEEDSYFDWALVRRVRRTLTRLRAANDTRGLMDALAVCVRANFAGTESVKMYSETFIGTKKAVEAHIKEVAACLDYVRTATDVSLEEKRAFFRAVNKHYGSSALCLSGGASFGYYHFGVIKAFLEADLLPRVITGTSAGGLCAALLCTRTDSELKELLVPELADKITACSDPFTVWFKRFRQTGARFDTIDWARRSMWFTRGSLTFKEAYTKTGRALNISVVPSDRHSPTILLNHLTAPNCLIWSAILASAAVPGILNPVVLMAKDRSGNIKPHNLGGSRFKDGSLREDIPLGSLHTQFNCNFSIVSQTNPHIHLFFFAPRGSVGRPVAHRKGKGWRGGFILSALESYIKLDLSKHFKVIRDLDLMPQILQSDWSGVFLQRFSGDLTLTPRSTIGDWFHILSDPDRPQMKRMLRVGERVAWPALGMVRNRMTVERAILRGRSEVRTALSHDRTSNDPATSLPETNPELTGALDHVPIESDVDAGFVSRSRRARNKTGSKGGDTPEEQLNLAGVFQLDESSKGVRRRKQKKSGMPLVAEPLGELPEVSPTHSPIATESPQRNYTSNFGDSFRHVRAPSLPALSSPFRSIRSNTSSSSNNVQSPSSSQRFRSQLSITRWFGGVSESSSDEEDEDLGGLQSGEATASSGEEGIPTFQLDSAVESHSDRSEDEMLHSGANVKEEYQSEESEGKIPIPGGERVTQEKIDASMASGERLRPAGGSKGSAKTPPVQDGA.

The disordered stretch occupies residues N20 to R53. Low complexity predominate over residues S23–P33. The chain crosses the membrane as a helical span at residues W68 to T88. The 193-residue stretch at L243 to H435 folds into the PNPLA domain. Residues G274–G278 carry the GXSXG motif. S276 (nucleophile) is an active-site residue. Catalysis depends on D422, which acts as the Proton acceptor. Disordered regions lie at residues A586–D707, L720–R748, and V760–A871. Polar residues-rich tracts occupy residues N594–E606 and P687–G706. Residues S721–R748 show a composition bias toward low complexity. Residues V798–Y820 show a composition bias toward basic and acidic residues.

This sequence belongs to the PLPL family.

It is found in the membrane. In terms of biological role, probable lipid hydrolase. In Cryptococcus neoformans var. neoformans serotype D (strain B-3501A) (Filobasidiella neoformans), this protein is Patatin-like phospholipase domain-containing protein CNBE2340.